The sequence spans 422 residues: UDP-N-acetylmuramoylalanine--D-glutamate ligase (422 aa).

An ATP-binding site is contributed by 102 to 108 (GTNGKTT).

The protein belongs to the MurCDEF family.

The protein localises to the cytoplasm. It carries out the reaction UDP-N-acetyl-alpha-D-muramoyl-L-alanine + D-glutamate + ATP = UDP-N-acetyl-alpha-D-muramoyl-L-alanyl-D-glutamate + ADP + phosphate + H(+). The protein operates within cell wall biogenesis; peptidoglycan biosynthesis. Cell wall formation. Catalyzes the addition of glutamate to the nucleotide precursor UDP-N-acetylmuramoyl-L-alanine (UMA). This Helicobacter pylori (strain J99 / ATCC 700824) (Campylobacter pylori J99) protein is UDP-N-acetylmuramoylalanine--D-glutamate ligase.